The following is a 546-amino-acid chain: DDB1- and CUL4-associated factor 11 (546 aa).

The segment covering Met1 to Gly10 has biased composition (polar residues). The tract at residues Met1 to Val40 is disordered. A phosphoserine mark is found at Ser73 and Ser75. The segment at His79–Asp100 is disordered. Basic and acidic residues predominate over residues Asp80 to Asp89. 7 WD repeats span residues Thr170–Lys210, Asp216–Asp258, Glu263–Gln302, Ser305–Pro345, Gly353–Gly392, Gly435–Thr480, and Thr481–Asp520. Residues Asp521 to Gln546 are disordered. A compositionally biased stretch (polar residues) spans His537–Gln546.

Interacts with DDB1 and CUL4A.

It functions in the pathway protein modification; protein ubiquitination. Functionally, may function as a substrate receptor for CUL4-DDB1 E3 ubiquitin-protein ligase complex. This is DDB1- and CUL4-associated factor 11 (DCAF11) from Bos taurus (Bovine).